We begin with the raw amino-acid sequence, 287 residues long: Eukaryotic translation initiation factor 3 subunit F (287 aa).

The 131-residue stretch at 12-142 folds into the MPN domain; that stretch reads VRVHPVVLFQ…IKAYVCVSLG (131 aa).

The protein belongs to the eIF-3 subunit F family. Component of the eukaryotic translation initiation factor 3 (eIF-3) complex.

The protein localises to the cytoplasm. Its function is as follows. Component of the eukaryotic translation initiation factor 3 (eIF-3) complex, which is involved in protein synthesis of a specialized repertoire of mRNAs and, together with other initiation factors, stimulates binding of mRNA and methionyl-tRNAi to the 40S ribosome. The eIF-3 complex specifically targets and initiates translation of a subset of mRNAs involved in cell proliferation. The polypeptide is Eukaryotic translation initiation factor 3 subunit F (Culex quinquefasciatus (Southern house mosquito)).